Consider the following 600-residue polypeptide: Proline--tRNA ligase (600 aa).

The protein belongs to the class-II aminoacyl-tRNA synthetase family. ProS type 1 subfamily. Homodimer.

The protein resides in the cytoplasm. The enzyme catalyses tRNA(Pro) + L-proline + ATP = L-prolyl-tRNA(Pro) + AMP + diphosphate. In terms of biological role, catalyzes the attachment of proline to tRNA(Pro) in a two-step reaction: proline is first activated by ATP to form Pro-AMP and then transferred to the acceptor end of tRNA(Pro). As ProRS can inadvertently accommodate and process non-cognate amino acids such as alanine and cysteine, to avoid such errors it has two additional distinct editing activities against alanine. One activity is designated as 'pretransfer' editing and involves the tRNA(Pro)-independent hydrolysis of activated Ala-AMP. The other activity is designated 'posttransfer' editing and involves deacylation of mischarged Ala-tRNA(Pro). The misacylated Cys-tRNA(Pro) is not edited by ProRS. The sequence is that of Proline--tRNA ligase from Prochlorococcus marinus subsp. pastoris (strain CCMP1986 / NIES-2087 / MED4).